A 211-amino-acid chain; its full sequence is Phosphoheptose isomerase (211 aa).

The SIS domain occupies 50-211; it reads IAGTFEDGGK…VERMLGYCRL (162 aa). 65–67 lines the substrate pocket; sequence NGG. Residues H74 and E78 each coordinate Zn(2+). Substrate-binding positions include E78, 109–110, 135–137, S140, and Q188; these read ND and STS. 2 residues coordinate Zn(2+): Q188 and H196.

The protein belongs to the SIS family. GmhA subfamily. The cofactor is Zn(2+).

The protein localises to the cytoplasm. The catalysed reaction is 2 D-sedoheptulose 7-phosphate = D-glycero-alpha-D-manno-heptose 7-phosphate + D-glycero-beta-D-manno-heptose 7-phosphate. It functions in the pathway carbohydrate biosynthesis; D-glycero-D-manno-heptose 7-phosphate biosynthesis; D-glycero-alpha-D-manno-heptose 7-phosphate and D-glycero-beta-D-manno-heptose 7-phosphate from sedoheptulose 7-phosphate: step 1/1. Catalyzes the isomerization of sedoheptulose 7-phosphate in D-glycero-D-manno-heptose 7-phosphate. This chain is Phosphoheptose isomerase, found in Pelodictyon phaeoclathratiforme (strain DSM 5477 / BU-1).